We begin with the raw amino-acid sequence, 163 residues long: 2-C-methyl-D-erythritol 2,4-cyclodiphosphate synthase (163 aa).

Asp-12 and His-14 together coordinate a divalent metal cation. 4-CDP-2-C-methyl-D-erythritol 2-phosphate-binding positions include 12 to 14 (DVH) and 38 to 39 (HS). His-46 is a binding site for a divalent metal cation. Residues 60–62 (DIG), 136–139 (TTSE), Phe-143, and Arg-146 contribute to the 4-CDP-2-C-methyl-D-erythritol 2-phosphate site.

The protein belongs to the IspF family. Homotrimer. The cofactor is a divalent metal cation.

The enzyme catalyses 4-CDP-2-C-methyl-D-erythritol 2-phosphate = 2-C-methyl-D-erythritol 2,4-cyclic diphosphate + CMP. It functions in the pathway isoprenoid biosynthesis; isopentenyl diphosphate biosynthesis via DXP pathway; isopentenyl diphosphate from 1-deoxy-D-xylulose 5-phosphate: step 4/6. Functionally, involved in the biosynthesis of isopentenyl diphosphate (IPP) and dimethylallyl diphosphate (DMAPP), two major building blocks of isoprenoid compounds. Catalyzes the conversion of 4-diphosphocytidyl-2-C-methyl-D-erythritol 2-phosphate (CDP-ME2P) to 2-C-methyl-D-erythritol 2,4-cyclodiphosphate (ME-CPP) with a corresponding release of cytidine 5-monophosphate (CMP). This is 2-C-methyl-D-erythritol 2,4-cyclodiphosphate synthase from Xanthomonas oryzae pv. oryzae (strain MAFF 311018).